The sequence spans 467 residues: Acid phosphatase PHO11 (467 aa).

Residues 1–17 (MLKSAVYSILAASLVNA) form the signal peptide. His75 (nucleophile) is an active-site residue. Asn97, Asn162, Asn192, Asn250, and Asn315 each carry an N-linked (GlcNAc...) asparagine glycan. The Proton donor role is filled by Asp338. N-linked (GlcNAc...) asparagine glycosylation is found at Asn356, Asn390, Asn439, Asn445, and Asn461.

Belongs to the histidine acid phosphatase family. In terms of processing, glycosylated during secretion across the membrane.

It catalyses the reaction a phosphate monoester + H2O = an alcohol + phosphate. The protein is Acid phosphatase PHO11 (PHO11) of Saccharomyces cerevisiae (strain ATCC 204508 / S288c) (Baker's yeast).